The following is a 139-amino-acid chain: Large ribosomal subunit protein uL22 (139 aa).

Residues 1–22 (MVSENEKTRRPKRSIQHRQNKD) form a disordered region. A compositionally biased stretch (basic residues) spans 9–18 (RRPKRSIQHR).

This sequence belongs to the universal ribosomal protein uL22 family. Part of the 50S ribosomal subunit.

This protein binds specifically to 23S rRNA; its binding is stimulated by other ribosomal proteins, e.g. L4, L17, and L20. It is important during the early stages of 50S assembly. It makes multiple contacts with different domains of the 23S rRNA in the assembled 50S subunit and ribosome. In terms of biological role, the globular domain of the protein is located near the polypeptide exit tunnel on the outside of the subunit, while an extended beta-hairpin is found that lines the wall of the exit tunnel in the center of the 70S ribosome. This is Large ribosomal subunit protein uL22 from Pseudothermotoga lettingae (strain ATCC BAA-301 / DSM 14385 / NBRC 107922 / TMO) (Thermotoga lettingae).